The following is a 508-amino-acid chain: Serine/threonine protein kinase OSK3 (508 aa).

The Protein kinase domain maps to 17-269 (YNLGRTLGIG…IREIREHQWF (253 aa)). ATP contacts are provided by residues 23–31 (LGIGSFGKV) and Lys-46. Asp-140 acts as the Proton acceptor in catalysis. A UBA domain is found at 290–330 (MIDEDTLQDVVNLGYGKDHVCESLRNRLQNEATVAYYLLLD). The KA1 domain maps to 459–507 (NGRLPAVIKFEIQLYKTRDEKYLLDMQRVTGPQLLFLDFCADFLTKLRV).

The protein belongs to the protein kinase superfamily. Ser/Thr protein kinase family. Interacts with HDR1. In terms of tissue distribution, strongly expressed in immature seeds. Mostly expressed in panicles, and to a lower extent, in leaf sheaths.

It localises to the nucleus. The enzyme catalyses L-seryl-[protein] + ATP = O-phospho-L-seryl-[protein] + ADP + H(+). It catalyses the reaction L-threonyl-[protein] + ATP = O-phospho-L-threonyl-[protein] + ADP + H(+). The sequence is that of Serine/threonine protein kinase OSK3 from Oryza sativa subsp. indica (Rice).